The following is a 378-amino-acid chain: Putative gustatory receptor 22f (378 aa).

Residues 1–13 (MKMFQPRRGFSCH) are Cytoplasmic-facing. Residues 14–34 (LAWFMLQTTLYASWLLGLFPF) traverse the membrane as a helical segment. Over 35-48 (TFDSRRKQLKRSRW) the chain is Extracellular. Residues 49–69 (LLLYGFVLHSLAMCLAMSSHL) traverse the membrane as a helical segment. At 70 to 88 (ASKQRRKYNAFERNPLLEK) the chain is on the cytoplasmic side. Residues 89 to 109 (IYMQFQVTTFFTISVLLLMNV) form a helical membrane-spanning segment. The Extracellular portion of the chain corresponds to 110–143 (WKSNTVRKIANELLTLEGQVKDLLTLKNCPNFNC). The chain crosses the membrane as a helical span at residues 144-164 (FVIKKHVAAIGQFVISIYFCL). Topologically, residues 165-178 (CQENSYPKILKILC) are cytoplasmic. Residues 179-199 (CLPSVGLQLIIMHFHTEIILV) form a helical membrane-spanning segment. The Extracellular segment spans residues 200-245 (YRYVWLVNETLEDSHHLSSSRIHALASLYDRLLKLSELVVACNDLQ). Asn207 carries N-linked (GlcNAc...) asparagine glycosylation. Residues 246–266 (LILMLIIYLIGNTVQIFFLIV) traverse the membrane as a helical segment. Residues 267–354 (LGVSMNKRYI…LCGLFSINHN (88 aa)) lie on the Cytoplasmic side of the membrane. The helical transmembrane segment at 355 to 375 (MGFQMIITSFLYLVYLLQFDF) threads the bilayer. At 376 to 378 (MNL) the chain is on the extracellular side.

This sequence belongs to the insect chemoreceptor superfamily. Gustatory receptor (GR) family. Gr22e subfamily. As to expression, taste bristles in the foreleg and labial palps.

It is found in the cell membrane. Functionally, probable gustatory receptor which mediates acceptance or avoidance behavior, depending on its substrates. The chain is Putative gustatory receptor 22f (Gr22f) from Drosophila melanogaster (Fruit fly).